The primary structure comprises 618 residues: 2-succinyl-5-enolpyruvyl-6-hydroxy-3-cyclohexene-1-carboxylate synthase (618 aa).

The segment at 192 to 215 (DPVAERGRDGPYVDVTPGSPEPGD) is disordered.

It belongs to the TPP enzyme family. MenD subfamily. Homodimer. The cofactor is Mg(2+). It depends on Mn(2+) as a cofactor. Requires thiamine diphosphate as cofactor.

It carries out the reaction isochorismate + 2-oxoglutarate + H(+) = 5-enolpyruvoyl-6-hydroxy-2-succinyl-cyclohex-3-ene-1-carboxylate + CO2. The protein operates within quinol/quinone metabolism; 1,4-dihydroxy-2-naphthoate biosynthesis; 1,4-dihydroxy-2-naphthoate from chorismate: step 2/7. Its pathway is quinol/quinone metabolism; menaquinone biosynthesis. Its function is as follows. Catalyzes the thiamine diphosphate-dependent decarboxylation of 2-oxoglutarate and the subsequent addition of the resulting succinic semialdehyde-thiamine pyrophosphate anion to isochorismate to yield 2-succinyl-5-enolpyruvyl-6-hydroxy-3-cyclohexene-1-carboxylate (SEPHCHC). The protein is 2-succinyl-5-enolpyruvyl-6-hydroxy-3-cyclohexene-1-carboxylate synthase of Halorubrum lacusprofundi (strain ATCC 49239 / DSM 5036 / JCM 8891 / ACAM 34).